A 405-amino-acid polypeptide reads, in one-letter code: Caspase-1 (405 aa).

Residues 1 to 91 enclose the CARD domain; that stretch reads MADKVLKEKR…HLAETLRLSS (91 aa). Residues 1 to 119 constitute a propeptide that is removed on maturation; it reads MADKVLKEKR…SSPALQAMPD (119 aa). Residues histidine 238 and cysteine 286 contribute to the active site. A propeptide spanning residues 299 to 317 is cleaved from the precursor; that stretch reads STGTSGNSSSLAPDDFEDD. The residue at position 303 (serine 303) is a Phosphoserine.

The protein belongs to the peptidase C14A family. As to quaternary structure, heterotetramer that consists of two anti-parallel arranged heterodimers, each one formed by a 20 kDa (Caspase-1 subunit p20) and a 10 kDa (Caspase-1 subunit p10) subunit. May be a component of the inflammasome, a protein complex which also includes PYCARD, CARD8 and NLRP2 and whose function would be the activation of pro-inflammatory caspases. Component of the AIM2 PANoptosome complex, a multiprotein complex that drives inflammatory cell death (PANoptosis). Both the p10 and p20 subunits interact with MEFV. Interacts with CARD17P/INCA and CARD18. Interacts with SERPINB1; this interaction regulates CASP1 activity. Heterotetramer that consists of two anti-parallel arranged heterodimers, each one formed by a 20 kDa (Caspase-1 subunit p20) and a 10 kDa (Caspase-1 subunit p10) subunit. The two subunits are derived from the precursor sequence by an autocatalytic mechanism. Post-translationally, ubiquitinated via 'Lys-11'-linked polyubiquitination. Deubiquitinated by USP8.

It localises to the cytoplasm. Its subcellular location is the cell membrane. The catalysed reaction is Strict requirement for an Asp residue at position P1 and has a preferred cleavage sequence of Tyr-Val-Ala-Asp-|-.. Functionally, thiol protease involved in a variety of inflammatory processes by proteolytically cleaving other proteins, such as the precursors of the inflammatory cytokines interleukin-1 beta (IL1B) and interleukin 18 (IL18) as well as the pyroptosis inducer Gasdermin-D (GSDMD), into active mature peptides. Plays a key role in cell immunity as an inflammatory response initiator: once activated through formation of an inflammasome complex, it initiates a pro-inflammatory response through the cleavage of the two inflammatory cytokines IL1B and IL18, releasing the mature cytokines which are involved in a variety of inflammatory processes. Cleaves a tetrapeptide after an Asp residue at position P1. Also initiates pyroptosis, a programmed lytic cell death pathway, through cleavage of GSDMD. In contrast to cleavage of interleukin IL1B, recognition and cleavage of GSDMD is not strictly dependent on the consensus cleavage site but depends on an exosite interface on CASP1 that recognizes and binds the Gasdermin-D, C-terminal (GSDMD-CT) part. Cleaves and activates CASP7 in response to bacterial infection, promoting plasma membrane repair. Upon inflammasome activation, during DNA virus infection but not RNA virus challenge, controls antiviral immunity through the cleavage of CGAS, rendering it inactive. In apoptotic cells, cleaves SPHK2 which is released from cells and remains enzymatically active extracellularly. The protein is Caspase-1 (CASP1) of Equus caballus (Horse).